The chain runs to 1036 residues: Isoleucine--tRNA ligase (1036 aa).

The 'HIGH' region motif lies at 46-56 (PFATGLPHYGH). The 'KMSKS' region motif lies at 589-593 (KMSKR). Residue Lys592 participates in ATP binding.

The protein belongs to the class-I aminoacyl-tRNA synthetase family. IleS type 2 subfamily. In terms of assembly, monomer. It depends on Zn(2+) as a cofactor.

The protein resides in the cytoplasm. The catalysed reaction is tRNA(Ile) + L-isoleucine + ATP = L-isoleucyl-tRNA(Ile) + AMP + diphosphate. Its function is as follows. Catalyzes the attachment of isoleucine to tRNA(Ile). As IleRS can inadvertently accommodate and process structurally similar amino acids such as valine, to avoid such errors it has two additional distinct tRNA(Ile)-dependent editing activities. One activity is designated as 'pretransfer' editing and involves the hydrolysis of activated Val-AMP. The other activity is designated 'posttransfer' editing and involves deacylation of mischarged Val-tRNA(Ile). The chain is Isoleucine--tRNA ligase from Chlamydia muridarum (strain MoPn / Nigg).